Reading from the N-terminus, the 271-residue chain is Inactive phospholipid phosphatase 7 (271 aa).

A disordered region spans residues 1 to 66 (MPASQSRARA…RERRQSQQLP (66 aa)). Over 1 to 112 (MPASQSRARA…AASWASARSM (112 aa)) the chain is Cytoplasmic. Residues serine 43 and serine 62 each carry the phosphoserine modification. Residues 70 to 91 (CMQLNPSFKGIAFNSLLAIDIC) form an interaction with MTOR region. Residues 113–133 (VKLIGITGHGIPWIGGTILCL) form a helical membrane-spanning segment. At 134 to 141 (VKSSTLAG) the chain is on the extracellular side. The helical transmembrane segment at 142–162 (QEVLMNLLLALLLDIMTVAGV) threads the bilayer. The Cytoplasmic portion of the chain corresponds to 163–202 (QKLIKRRGPYETSPSLLDYLTMDIYAFPAGHASRAAMVSK). The helical transmembrane segment at 203–223 (FFLSHLVLAVPLRVLLVLWAL) threads the bilayer. Residues 224 to 239 (CVGLSRVMIGRHHVTD) lie on the Extracellular side of the membrane. Residues 240-260 (VLSGFVIGYLQFRLVELVWMP) form a helical membrane-spanning segment. Residues 261-271 (SSTCQMLISAW) lie on the Cytoplasmic side of the membrane.

It belongs to the PA-phosphatase related phosphoesterase family. In terms of assembly, homo and heterooligomer. Interacts with MTOR; controls MTOR-dependent IGF2 expression during myoblast differentiation.

Its subcellular location is the nucleus envelope. The protein localises to the endoplasmic reticulum membrane. It localises to the membrane. In terms of biological role, plays a role as negative regulator of myoblast differentiation, in part through effects on MTOR signaling. Has no detectable enzymatic activity. In Homo sapiens (Human), this protein is Inactive phospholipid phosphatase 7.